The following is a 572-amino-acid chain: Phenylalanine--tRNA ligase beta subunit (572 aa).

The 79-residue stretch at 285-363 (LSTTTKTVSH…RAFGFNELEP (79 aa)) folds into the B5 domain. Residues aspartate 341, aspartate 347, aspartate 350, and aspartate 351 each contribute to the Mg(2+) site.

Belongs to the phenylalanyl-tRNA synthetase beta subunit family. Type 2 subfamily. Tetramer of two alpha and two beta subunits. Mg(2+) is required as a cofactor.

It is found in the cytoplasm. It carries out the reaction tRNA(Phe) + L-phenylalanine + ATP = L-phenylalanyl-tRNA(Phe) + AMP + diphosphate + H(+). This Natronomonas pharaonis (strain ATCC 35678 / DSM 2160 / CIP 103997 / JCM 8858 / NBRC 14720 / NCIMB 2260 / Gabara) (Halobacterium pharaonis) protein is Phenylalanine--tRNA ligase beta subunit.